The primary structure comprises 353 residues: Photosystem II D2 protein (353 aa).

An N-acetylthreonine modification is found at Thr-2. Phosphothreonine is present on Thr-2. The chain crosses the membrane as a helical span at residues Cys-41–Thr-61. A chlorophyll a-binding site is contributed by His-118. Residues Gly-125–Pro-141 form a helical membrane-spanning segment. Gln-130 and Asn-143 together coordinate pheophytin a. A helical membrane pass occupies residues Val-153–Ser-166. His-198 is a chlorophyll a binding site. Residues Ala-208–Asp-228 traverse the membrane as a helical segment. His-215 and Phe-262 together coordinate a plastoquinone. His-215 contributes to the Fe cation binding site. Residue His-269 coordinates Fe cation. The helical transmembrane segment at Gly-279–Arg-295 threads the bilayer.

This sequence belongs to the reaction center PufL/M/PsbA/D family. PSII is composed of 1 copy each of membrane proteins PsbA, PsbB, PsbC, PsbD, PsbE, PsbF, PsbH, PsbI, PsbJ, PsbK, PsbL, PsbM, PsbT, PsbX, PsbY, PsbZ, Psb30/Ycf12, at least 3 peripheral proteins of the oxygen-evolving complex and a large number of cofactors. It forms dimeric complexes. Requires The D1/D2 heterodimer binds P680, chlorophylls that are the primary electron donor of PSII, and subsequent electron acceptors. It shares a non-heme iron and each subunit binds pheophytin, quinone, additional chlorophylls, carotenoids and lipids. There is also a Cl(-1) ion associated with D1 and D2, which is required for oxygen evolution. The PSII complex binds additional chlorophylls, carotenoids and specific lipids. as cofactor.

The protein localises to the plastid. It is found in the chloroplast thylakoid membrane. The enzyme catalyses 2 a plastoquinone + 4 hnu + 2 H2O = 2 a plastoquinol + O2. Its function is as follows. Photosystem II (PSII) is a light-driven water:plastoquinone oxidoreductase that uses light energy to abstract electrons from H(2)O, generating O(2) and a proton gradient subsequently used for ATP formation. It consists of a core antenna complex that captures photons, and an electron transfer chain that converts photonic excitation into a charge separation. The D1/D2 (PsbA/PsbD) reaction center heterodimer binds P680, the primary electron donor of PSII as well as several subsequent electron acceptors. D2 is needed for assembly of a stable PSII complex. The protein is Photosystem II D2 protein of Chara vulgaris (Common stonewort).